A 467-amino-acid chain; its full sequence is Coiled-coil domain-containing protein 71 (467 aa).

Positions 81 to 105 (PSQTKLQARAPNPTATSPPASAPRT) are disordered. Low complexity predominate over residues 88-105 (ARAPNPTATSPPASAPRT). Serine 129 is modified (phosphoserine). 2 disordered regions span residues 211–280 (KLRK…GTKT) and 349–416 (VRAK…KAWL). Residues 253–265 (GHQSKTNRATGSP) show a composition bias toward polar residues. Positions 279–359 (KTAQAKVART…RAKAKVARTQ (81 aa)) form a coiled coil. Residues 349–380 (VRAKAKVARTQPRGRGRPKGSAKARTTRKGQK) show a composition bias toward basic residues. Over residues 392 to 401 (RAEEAKDLPP) the composition is skewed to basic and acidic residues.

In Homo sapiens (Human), this protein is Coiled-coil domain-containing protein 71 (CCDC71).